We begin with the raw amino-acid sequence, 234 residues long: Protein fmp52, mitochondrial (234 aa).

Residues 1–36 (MANVALLGCTGMVGSHILTHLLGNSSVARIDTISRR) constitute a mitochondrion transit peptide.

This sequence belongs to the FMP52 family.

Its subcellular location is the mitochondrion outer membrane. The chain is Protein fmp52, mitochondrial (fmp52) from Aspergillus niger (strain ATCC MYA-4892 / CBS 513.88 / FGSC A1513).